Consider the following 182-residue polypeptide: Guanylate kinase (182 aa).

In terms of domain architecture, Guanylate kinase-like spans 2-180 (GTLTVITGPS…ALLKLEGLMG (179 aa)). Residue 9-16 (GPSGVGKG) participates in ATP binding.

Belongs to the guanylate kinase family.

It localises to the cytoplasm. The catalysed reaction is GMP + ATP = GDP + ADP. It catalyses the reaction dZMP + ATP = dZDP + ADP. Its pathway is purine metabolism. Functionally, essential for recycling GMP and indirectly, cGMP. (Microbial infection) Catalyzes the phosphorylation of dZMP to dZDP, when the bacterium is infected by a phage that produces the substrate for the synthesis of dZTP (2- amino-2'-deoxyadenosine 5'-triphosphate), which is then used by the phage as a DNA polymerase substrate. The sequence is that of Guanylate kinase from Parasynechococcus marenigrum (strain WH8102).